Consider the following 611-residue polypeptide: Chaperone protein DnaK (611 aa).

Threonine 173 carries the post-translational modification Phosphothreonine; by autocatalysis. Positions 577-591 are enriched in low complexity; that stretch reads AAAAQAAQGGEADAG. The tract at residues 577–611 is disordered; sequence AAAAQAAQGGEADAGAGKKDDGVVDADFEEVKDDK. The segment covering 599-611 has biased composition (acidic residues); the sequence is VVDADFEEVKDDK.

This sequence belongs to the heat shock protein 70 family.

Functionally, acts as a chaperone. In Lysinibacillus sphaericus (strain C3-41), this protein is Chaperone protein DnaK.